A 289-amino-acid chain; its full sequence is Cyclin-dependent kinase 2 homolog (289 aa).

Residues Tyr-4–Phe-285 enclose the Protein kinase domain. ATP contacts are provided by residues Ile-10–Val-18 and Lys-32. Thr-14 is modified (phosphothreonine). At Tyr-15 the chain carries Phosphotyrosine. Residue Asp-126 is the Proton acceptor of the active site. Thr-159 is modified (phosphothreonine).

Belongs to the protein kinase superfamily. CMGC Ser/Thr protein kinase family. CDC2/CDKX subfamily. As to quaternary structure, may form a complex composed of at least the catalytic subunit CRK2 and a cyclin. Requires Mg(2+) as cofactor.

It localises to the cytoplasm. The enzyme catalyses L-seryl-[protein] + ATP = O-phospho-L-seryl-[protein] + ADP + H(+). It catalyses the reaction L-threonyl-[protein] + ATP = O-phospho-L-threonyl-[protein] + ADP + H(+). It carries out the reaction [DNA-directed RNA polymerase] + ATP = phospho-[DNA-directed RNA polymerase] + ADP + H(+). Phosphorylation at Thr-14 or Tyr-15 inactivates the enzyme, while phosphorylation at Thr-159 activates it. Serine/threonine-protein kinase. Involved in the control of the cell cycle. Required for entry into S-phase and mitosis. Probable component of the kinase complex that phosphorylates the repetitive C-terminus of RNA polymerase II. This chain is Cyclin-dependent kinase 2 homolog, found in Plasmodium yoelii yoelii.